The sequence spans 585 residues: Glutamate decarboxylase 2 (585 aa).

Over residues Met-1–Glu-14 the composition is skewed to low complexity. Residues Met-1–Gly-24 are disordered. Ser-3, Ser-6, Ser-10, and Ser-13 each carry phosphoserine. 2 S-palmitoyl cysteine lipidation sites follow: Cys-30 and Cys-45. Position 181–183 (Gln-181–Ser-183) interacts with substrate. Lys-396 is modified (N6-(pyridoxal phosphate)lysine). Arg-558 provides a ligand contact to substrate.

It belongs to the group II decarboxylase family. As to quaternary structure, homodimer. It depends on pyridoxal 5'-phosphate as a cofactor. Phosphorylated; which does not affect kinetic parameters or subcellular location. In terms of processing, palmitoylated; which is required for presynaptic clustering.

The protein resides in the cytoplasm. It is found in the cytosol. Its subcellular location is the cytoplasmic vesicle. It localises to the presynaptic cell membrane. The protein localises to the golgi apparatus membrane. The enzyme catalyses L-glutamate + H(+) = 4-aminobutanoate + CO2. In terms of biological role, catalyzes the production of GABA. The polypeptide is Glutamate decarboxylase 2 (Homo sapiens (Human)).